The primary structure comprises 679 residues: Glycine--tRNA ligase beta subunit (679 aa).

Belongs to the class-II aminoacyl-tRNA synthetase family. In terms of assembly, tetramer of two alpha and two beta subunits.

It is found in the cytoplasm. The catalysed reaction is tRNA(Gly) + glycine + ATP = glycyl-tRNA(Gly) + AMP + diphosphate. The protein is Glycine--tRNA ligase beta subunit of Streptococcus agalactiae serotype III (strain NEM316).